The chain runs to 209 residues: uncharacterized protein (209 aa).

The tract at residues 177–209 is disordered; the sequence is DNSDNSSDSDDSDSLDGSDDLNDSDNVDNLFVG. The segment covering 183 to 202 has biased composition (acidic residues); the sequence is SDSDDSDSLDGSDDLNDSDN.

This is an uncharacterized protein from Acanthamoeba polyphaga (Amoeba).